A 279-amino-acid polypeptide reads, in one-letter code: Ankyrin repeat domain-containing protein 7 (279 aa).

Residues 1–11 (MKKFFPFRGKR) are compositionally biased toward basic residues. The disordered stretch occupies residues 1 to 25 (MKKFFPFRGKRKTDDSHSHSSEVPI). ANK repeat units follow at residues 80 to 109 (RSRT…KINV), 113 to 142 (ENRT…DPNL), 146 to 175 (YSNT…NLEA), 179 to 208 (DGHT…DVNA), and 212 to 241 (NHRT…DLAH).

The protein is Ankyrin repeat domain-containing protein 7 (Ankrd7) of Mus musculus (Mouse).